A 286-amino-acid polypeptide reads, in one-letter code: Bifunctional protein FolD (286 aa).

NADP(+)-binding positions include 165–167 (GRS) and serine 190.

Belongs to the tetrahydrofolate dehydrogenase/cyclohydrolase family. Homodimer.

It catalyses the reaction (6R)-5,10-methylene-5,6,7,8-tetrahydrofolate + NADP(+) = (6R)-5,10-methenyltetrahydrofolate + NADPH. The catalysed reaction is (6R)-5,10-methenyltetrahydrofolate + H2O = (6R)-10-formyltetrahydrofolate + H(+). Its pathway is one-carbon metabolism; tetrahydrofolate interconversion. Catalyzes the oxidation of 5,10-methylenetetrahydrofolate to 5,10-methenyltetrahydrofolate and then the hydrolysis of 5,10-methenyltetrahydrofolate to 10-formyltetrahydrofolate. The sequence is that of Bifunctional protein FolD from Staphylococcus epidermidis (strain ATCC 35984 / DSM 28319 / BCRC 17069 / CCUG 31568 / BM 3577 / RP62A).